The primary structure comprises 86 residues: Small ribosomal subunit protein uS15 (86 aa).

Residues 1-22 (MSVDTQKVIEDNKRSAQDTGSP) form a disordered region. Over residues 7-16 (KVIEDNKRSA) the composition is skewed to basic and acidic residues.

This sequence belongs to the universal ribosomal protein uS15 family. As to quaternary structure, part of the 30S ribosomal subunit. Forms a bridge to the 50S subunit in the 70S ribosome, contacting the 23S rRNA.

One of the primary rRNA binding proteins, it binds directly to 16S rRNA where it helps nucleate assembly of the platform of the 30S subunit by binding and bridging several RNA helices of the 16S rRNA. Functionally, forms an intersubunit bridge (bridge B4) with the 23S rRNA of the 50S subunit in the ribosome. In Xanthomonas campestris pv. campestris (strain 8004), this protein is Small ribosomal subunit protein uS15.